A 458-amino-acid chain; its full sequence is Ribosomal protein uS12 methylthiotransferase RimO (458 aa).

In terms of domain architecture, MTTase N-terminal spans 26–136; that stretch reads PRIGMVSLGC…VLDAVHGAVP (111 aa). The [4Fe-4S] cluster site is built by C35, C71, C100, C167, C171, and C174. A Radical SAM core domain is found at 153–389; the sequence is LTPRHYAYLK…MEKAQAISEA (237 aa). The TRAM domain occupies 392–458; the sequence is QAKVGRTMQV…SEYDLWGKLT (67 aa).

This sequence belongs to the methylthiotransferase family. RimO subfamily. The cofactor is [4Fe-4S] cluster.

The protein localises to the cytoplasm. The catalysed reaction is L-aspartate(89)-[ribosomal protein uS12]-hydrogen + (sulfur carrier)-SH + AH2 + 2 S-adenosyl-L-methionine = 3-methylsulfanyl-L-aspartate(89)-[ribosomal protein uS12]-hydrogen + (sulfur carrier)-H + 5'-deoxyadenosine + L-methionine + A + S-adenosyl-L-homocysteine + 2 H(+). In terms of biological role, catalyzes the methylthiolation of an aspartic acid residue of ribosomal protein uS12. This is Ribosomal protein uS12 methylthiotransferase RimO from Jannaschia sp. (strain CCS1).